Here is a 325-residue protein sequence, read N- to C-terminus: Dehydrogenase/reductase SDR family member 7B (325 aa).

Residues Met1 to Asp17 are Cytoplasmic-facing. Residues Phe18–Phe38 traverse the membrane as a helical; Signal-anchor for type II membrane protein segment. Residues Lys39–Ser325 lie on the Lumenal side of the membrane. Residues Ser62 and Leu64 each contribute to the NAD(+) site. Substrate is bound at residue Ser194. Tyr207, Lys211, and Thr242 together coordinate NAD(+). The Proton acceptor role is filled by Tyr207.

This sequence belongs to the short-chain dehydrogenases/reductases (SDR) family.

The protein localises to the endoplasmic reticulum membrane. Functionally, putative oxidoreductase. The protein is Dehydrogenase/reductase SDR family member 7B (DHRS7B) of Bos taurus (Bovine).